A 233-amino-acid polypeptide reads, in one-letter code: Purine nucleoside phosphorylase DeoD-type (233 aa).

Histidine 4 provides a ligand contact to a purine D-ribonucleoside. Phosphate contacts are provided by residues glycine 20, arginine 24, arginine 43, and 87–90; that span reads RVGT. A purine D-ribonucleoside is bound by residues glutamate 162, 179–181, and 203–204; these read EME and SD. Catalysis depends on aspartate 204, which acts as the Proton donor.

It belongs to the PNP/UDP phosphorylase family. Homohexamer; trimer of homodimers.

It carries out the reaction a purine D-ribonucleoside + phosphate = a purine nucleobase + alpha-D-ribose 1-phosphate. It catalyses the reaction a purine 2'-deoxy-D-ribonucleoside + phosphate = a purine nucleobase + 2-deoxy-alpha-D-ribose 1-phosphate. Its function is as follows. Catalyzes the reversible phosphorolytic breakdown of the N-glycosidic bond in the beta-(deoxy)ribonucleoside molecules, with the formation of the corresponding free purine bases and pentose-1-phosphate. In Alkaliphilus metalliredigens (strain QYMF), this protein is Purine nucleoside phosphorylase DeoD-type.